The sequence spans 324 residues: MTINLGIIMDPISSINIKKDSSFAILLEAQNRKYKIYYMELKDLYLKDNKPYSHTKLLRIKNNKKQWFTLEQQKDVSLSNLDVILMRKNPPINRAYIYATYILEQAERNGSYIINKPSSLRSYNEKLFTTTHFPQYIPKTLITSNSTKIHNFIKTYKDIIIKPLHGMAGLSIFRIKEHDPNTSVIIETMTKYETIPCISQNYITDIQKGDKRILIINGIPFPWCLARIPKKHENRGNLSIGGYGNTQKLSKNDWEIALSIAPTLNKKGIFFAGIDIIGTKLTEINITSPTCIQEIEQDTGISISTIILDNLEKNLKKRKTNRYL.

The ATP-grasp domain maps to 125–312 (EKLFTTTHFP…ISTIILDNLE (188 aa)). Position 152 to 209 (152 to 209 (FIKTYKDIIIKPLHGMAGLSIFRIKEHDPNTSVIIETMTKYETIPCISQNYITDIQKG)) interacts with ATP. Mg(2+) is bound by residues Glu-283 and Asn-285.

Belongs to the prokaryotic GSH synthase family. Mg(2+) serves as cofactor. Requires Mn(2+) as cofactor.

It carries out the reaction gamma-L-glutamyl-L-cysteine + glycine + ATP = glutathione + ADP + phosphate + H(+). It functions in the pathway sulfur metabolism; glutathione biosynthesis; glutathione from L-cysteine and L-glutamate: step 2/2. This is Glutathione synthetase from Buchnera aphidicola subsp. Baizongia pistaciae (strain Bp).